The following is a 1022-amino-acid chain: Protein translocase subunit SecA (1022 aa).

Residues Gln143, 161–165, and Asp661 contribute to the ATP site; that span reads GEGKT. The tract at residues 973 to 1001 is disordered; the sequence is AGSILSHESDVPSGTAAQQPIKADVKPGR. Positions 1005, 1007, 1016, and 1017 each coordinate Zn(2+).

The protein belongs to the SecA family. Monomer and homodimer. Part of the essential Sec protein translocation apparatus which comprises SecA, SecYEG and auxiliary proteins SecDF. Other proteins may also be involved. Zn(2+) serves as cofactor.

The protein localises to the cell inner membrane. It localises to the cytoplasm. It catalyses the reaction ATP + H2O + cellular proteinSide 1 = ADP + phosphate + cellular proteinSide 2.. Its function is as follows. Part of the Sec protein translocase complex. Interacts with the SecYEG preprotein conducting channel. Has a central role in coupling the hydrolysis of ATP to the transfer of proteins into and across the cell membrane, serving as an ATP-driven molecular motor driving the stepwise translocation of polypeptide chains across the membrane. The polypeptide is Protein translocase subunit SecA (Chlorobium phaeobacteroides (strain DSM 266 / SMG 266 / 2430)).